A 332-amino-acid chain; its full sequence is Protein EXORDIUM-like 6 (332 aa).

A signal peptide spans 1–27 (MAMASASSSSSSISVIIFLLLAPLCLS). Residues asparagine 36, asparagine 102, and asparagine 143 are each glycosylated (N-linked (GlcNAc...) asparagine).

This sequence belongs to the EXORDIUM family.

Its subcellular location is the secreted. It localises to the extracellular space. The protein resides in the apoplast. Functionally, may play a role in a brassinosteroid-dependent regulation of growth and development. In Arabidopsis thaliana (Mouse-ear cress), this protein is Protein EXORDIUM-like 6 (EXL6).